Here is a 286-residue protein sequence, read N- to C-terminus: Homeobox-leucine zipper protein ATHB-20 (286 aa).

Positions 84–143 (LGEKKKRLQLEQVKALEKSFELGNKLEPERKIQLAKALGMQPRQIAIWFQNRRARWKTRQ) form a DNA-binding region, homeobox. Residues 144–179 (LERDYDSLKKQFESLKSDNASLLAYNKKLLAEVMAL) form a leucine-zipper region.

It belongs to the HD-ZIP homeobox family. Class I subfamily. In terms of tissue distribution, widely expressed.

It localises to the nucleus. Functionally, probable transcription factor. The protein is Homeobox-leucine zipper protein ATHB-20 (ATHB-20) of Arabidopsis thaliana (Mouse-ear cress).